Here is a 380-residue protein sequence, read N- to C-terminus: Succinyl-diaminopimelate desuccinylase (380 aa).

Histidine 71 is a binding site for Zn(2+). Residue aspartate 73 is part of the active site. Aspartate 104 is a Zn(2+) binding site. The active-site Proton acceptor is glutamate 136. Zn(2+)-binding residues include glutamate 137, glutamate 166, and histidine 351.

The protein belongs to the peptidase M20A family. DapE subfamily. In terms of assembly, homodimer. The cofactor is Zn(2+). Co(2+) is required as a cofactor.

The catalysed reaction is N-succinyl-(2S,6S)-2,6-diaminopimelate + H2O = (2S,6S)-2,6-diaminopimelate + succinate. It participates in amino-acid biosynthesis; L-lysine biosynthesis via DAP pathway; LL-2,6-diaminopimelate from (S)-tetrahydrodipicolinate (succinylase route): step 3/3. Its function is as follows. Catalyzes the hydrolysis of N-succinyl-L,L-diaminopimelic acid (SDAP), forming succinate and LL-2,6-diaminopimelate (DAP), an intermediate involved in the bacterial biosynthesis of lysine and meso-diaminopimelic acid, an essential component of bacterial cell walls. The chain is Succinyl-diaminopimelate desuccinylase from Ehrlichia canis (strain Jake).